Reading from the N-terminus, the 658-residue chain is MSQVAAESTAGLDQQFVGLDLKSSDNQNGGGNTESKGRYIPPHLRNRETSKGVCDKDSSGWSCSKDKDAYSSFGSRDSRGKPNYFSDRGSGSRGRFDDHGRNDYDGIGGRDRTGFGKFERSGHSRWSDRSDEDDWSKPLPPSERLEQELFSGGNTGINFEKYDDIPVEATGNNCPPHIENFSDIEMGEIIMGNIELTRYTRPTPVQKHAIPIIKEKRDLMACAQTGSGKTAAFLLPILSQIYTDGPGEALKAMKENGRYGRRKQYPISLVLAPTRELAVQIYEEARKFSYRSRVRPCVVYGGADTVQQIRDLERGCHLLVATPGRLVDMMERGKIGLDFCKYLVLDEADRMLDMGFEPQIRRIVEQDTMPPKGVRHTMMFSATFPKEIQMLARDFLDEYIFLAVGRVGSTSENITQKVVWVEELDKRSFLLDLLNATGKDSLTLVFVETKKGADSLENFLFQERYACTSIHGDRSQKDREEALHQFRSGRKPILVATAVAARGLDISNVKHVINFDLPSDIEEYVHRIGRTGRVGNLGLATSFFNERNLNITKDLLDLLVEAKQEVPSWLESMAYEHHYKGSSRGRSKSRFSGGFGARDYRQSSGSANAGFNSNRANSSRSSGSSHNRGFGGGGYGGFYNNDGYGGNYNSQAVDWWGN.

Positions 1 to 143 (MSQVAAESTA…DWSKPLPPSE (143 aa)) are disordered. Ser2 carries the N-acetylserine modification. A compositionally biased stretch (basic and acidic residues) spans 45–69 (RNRETSKGVCDKDSSGWSCSKDKDA). Lys56 carries the post-translational modification N6-acetyllysine. Phosphoserine occurs at positions 86 and 90. Over residues 94-129 (GRFDDHGRNDYDGIGGRDRTGFGKFERSGHSRWSDR) the composition is skewed to basic and acidic residues. An Omega-N-methylarginine modification is found at Arg101. Tyr104 is modified (phosphotyrosine). Residue Arg110 is modified to Omega-N-methylarginine. Lys117 is modified (N6-acetyllysine). Phosphoserine occurs at positions 130 and 182. The Q motif signature appears at 179-207 (ENFSDIEMGEIIMGNIELTRYTRPTPVQK). Residue 199–206 (YTRPTPVQ) coordinates ATP. Positions 210–402 (IPIIKEKRDL…RDFLDEYIFL (193 aa)) constitute a Helicase ATP-binding domain. A Glycyl lysine isopeptide (Lys-Gly) (interchain with G-Cter in SUMO2) cross-link involves residue Lys214. 223–230 (AQTGSGKT) is a binding site for ATP. The DEAD box motif lies at 346–349 (DEAD). The 162-residue stretch at 413 to 574 (NITQKVVWVE…EVPSWLESMA (162 aa)) folds into the Helicase C-terminal domain. Ser455 is subject to Phosphoserine. At Arg590 the chain carries Omega-N-methylarginine. Residues Ser592 and Ser603 each carry the phosphoserine modification. Positions 597–627 (ARDYRQSSGSANAGFNSNRANSSRSSGSSHN) are disordered. Residues 603-627 (SSGSANAGFNSNRANSSRSSGSSHN) show a composition bias toward low complexity. Omega-N-methylarginine is present on residues Arg615 and Arg628.

Belongs to the DEAD box helicase family. DDX3/DED1 subfamily. Found in heart, brain, liver, skeletal muscle, kidney and testis. Low expression detected in lung. In testis, expressed in all types of spermatogenic cells including spermatogonia, spermatocytes, spermatids and somatic Sertoli cells within the seminiferous tubules. Also expressed in Leydig cells and other interstitial cells.

Its subcellular location is the cytoplasm. It is found in the nucleus. It carries out the reaction ATP + H2O = ADP + phosphate + H(+). Its function is as follows. Probable ATP-dependent RNA helicase. During immune response, may enhance IFNB1 expression via IRF3/IRF7 pathway. The chain is ATP-dependent RNA helicase DDX3Y (Ddx3y) from Mus musculus (Mouse).